Here is a 550-residue protein sequence, read N- to C-terminus: Arginine--tRNA ligase (550 aa).

A 'HIGH' region motif is present at residues 130 to 140; it reads ANPTGPIHIGG.

Belongs to the class-I aminoacyl-tRNA synthetase family. As to quaternary structure, monomer.

The protein localises to the cytoplasm. The enzyme catalyses tRNA(Arg) + L-arginine + ATP = L-arginyl-tRNA(Arg) + AMP + diphosphate. This is Arginine--tRNA ligase from Mycobacterium marinum (strain ATCC BAA-535 / M).